The following is a 707-amino-acid chain: DNA ligase (707 aa).

The tract at residues 1–23 is disordered; sequence MSSKATQDPEAVLAEQSDDATEA. NAD(+) is bound by residues 53-57, 103-104, and Glu-133; these read DAEFD and SL. The active-site N6-AMP-lysine intermediate is Lys-135. Positions 156, 196, 315, and 339 each coordinate NAD(+). Positions 433, 436, 452, and 458 each coordinate Zn(2+). A BRCT domain is found at 622–707; the sequence is SIERTLDGLS…LENGPDTPDS (86 aa).

This sequence belongs to the NAD-dependent DNA ligase family. LigA subfamily. Requires Mg(2+) as cofactor. It depends on Mn(2+) as a cofactor.

The catalysed reaction is NAD(+) + (deoxyribonucleotide)n-3'-hydroxyl + 5'-phospho-(deoxyribonucleotide)m = (deoxyribonucleotide)n+m + AMP + beta-nicotinamide D-nucleotide.. Functionally, DNA ligase that catalyzes the formation of phosphodiester linkages between 5'-phosphoryl and 3'-hydroxyl groups in double-stranded DNA using NAD as a coenzyme and as the energy source for the reaction. It is essential for DNA replication and repair of damaged DNA. This Mycolicibacterium vanbaalenii (strain DSM 7251 / JCM 13017 / BCRC 16820 / KCTC 9966 / NRRL B-24157 / PYR-1) (Mycobacterium vanbaalenii) protein is DNA ligase.